Consider the following 437-residue polypeptide: Anhydromevalonate phosphate decarboxylase (437 aa).

Mn(2+) contacts are provided by N136 and E199. The active-site Proton acceptor is D247.

This sequence belongs to the UbiD family. Prenylated FMN serves as cofactor. Mn(2+) is required as a cofactor.

It carries out the reaction (2E)-3-methyl-5-phosphooxypent-2-enoate + H(+) = isopentenyl phosphate + CO2. It participates in isoprenoid biosynthesis; isopentenyl diphosphate biosynthesis via mevalonate pathway. In terms of biological role, catalyzes the conversion of trans-anhydromevalonate 5-phosphate (tAHMP) into isopentenyl phosphate. Involved in the archaeal mevalonate (MVA) pathway, which provides fundamental precursors for isoprenoid biosynthesis, such as isopentenyl diphosphate (IPP) and dimethylallyl diphosphate (DMAPP). This chain is Anhydromevalonate phosphate decarboxylase, found in Aeropyrum pernix (strain ATCC 700893 / DSM 11879 / JCM 9820 / NBRC 100138 / K1).